A 391-amino-acid chain; its full sequence is MVTVDEVRKAQRAEGPATILAIGTATPPNCVDQSTYPDYYFRITKSEHKTELKEKFQRMCDKSMIKKRYMYLTEEILKENPSMCEYMAPSLDARQDMVVVEIPKLGKEAATKAIKEWGQPKSKITHLVFCTTSGVDMPGADYQLTKLLGLRPSVKRLMMYQQGCFAGGTVLRLAKDLAENNKGARVLVVCSEITAVTFRGPSDTHLDSLVGQALFGDGAAAIIVGSDPLPDIERPLFELVSAAQTILPDSDGAIDGHLREVGLTFHLLKDVPGLISKNIEKSLNEAFKPLDITDWNSLFWIAHPGGPAILDQVEAKLGLKPEKLEATRNILSEYGNMSSACVLFILDEVRRKSVANGHKTTGEGLEWGVLFGFGPGLTVETVVLHSVAAST.

Cys164 is a catalytic residue.

This sequence belongs to the thiolase-like superfamily. Chalcone/stilbene synthases family. As to quaternary structure, homodimer. In terms of tissue distribution, expressed in fruits.

It catalyses the reaction (E)-4-coumaroyl-CoA + 3 malonyl-CoA + 3 H(+) = 2',4,4',6'-tetrahydroxychalcone + 3 CO2 + 4 CoA. The protein operates within secondary metabolite biosynthesis; flavonoid biosynthesis. Functionally, polyketide synthase producing naringenin chalcone and slightly p-coumaryltriacetic acid lactone (CTAL). Can use p-coumaryl-CoA as substrate. This Rubus idaeus (Raspberry) protein is Polyketide synthase 1 (PKS1).